Consider the following 475-residue polypeptide: Chromosomal replication initiator protein DnaA (475 aa).

Residues 1–73 (MTNSEQERWS…LSCWQAEMPE (73 aa)) are domain I, interacts with DnaA modulators. The segment at 73-131 (EVHRIDLSVRTAMRCATPAKEAPVAVEARRAERGDAKPADTRAPVMTPVAASHDALGGS) is domain II. The tract at residues 132 to 354 (PLDPRLTFAS…GAINRLLAHS (223 aa)) is domain III, AAA+ region. Residues Gly179, Gly181, Lys182, and Thr183 each contribute to the ATP site. The interval 355–475 (KLNNQPVTLD…VEALKRQLQD (121 aa)) is domain IV, binds dsDNA.

The protein belongs to the DnaA family. As to quaternary structure, oligomerizes as a right-handed, spiral filament on DNA at oriC.

It localises to the cytoplasm. Plays an essential role in the initiation and regulation of chromosomal replication. ATP-DnaA binds to the origin of replication (oriC) to initiate formation of the DNA replication initiation complex once per cell cycle. Binds the DnaA box (a 9 base pair repeat at the origin) and separates the double-stranded (ds)DNA. Forms a right-handed helical filament on oriC DNA; dsDNA binds to the exterior of the filament while single-stranded (ss)DNA is stabiized in the filament's interior. The ATP-DnaA-oriC complex binds and stabilizes one strand of the AT-rich DNA unwinding element (DUE), permitting loading of DNA polymerase. After initiation quickly degrades to an ADP-DnaA complex that is not apt for DNA replication. Binds acidic phospholipids. The chain is Chromosomal replication initiator protein DnaA from Bradyrhizobium sp. (strain BTAi1 / ATCC BAA-1182).